Consider the following 919-residue polypeptide: Lipoxygenase 3, chloroplastic (919 aa).

The N-terminal 52 residues, 1–52, are a transit peptide targeting the chloroplast; sequence MALAKELMGYPLITERSSLVSSASHFKKRTQSTQFSINPFDRRPRKTKSGVV. The region spanning 86-222 is the PLAT domain; it reads VRAVVTVRNK…DHPDKRIFFT (137 aa). In terms of domain architecture, Lipoxygenase spans 225–919; it reads PYLPNETPSG…CRGVPNSVSI (695 aa). A disordered region spans residues 272–310; that stretch reads PDKSSELSRPKLGGKEVPYPRRCRTGRQSTVSDKDAESR. Positions 578, 583, 770, 774, and 919 each coordinate Fe cation.

This sequence belongs to the lipoxygenase family. Fe cation serves as cofactor. Expressed in roots and leaves.

The protein resides in the plastid. The protein localises to the chloroplast. It carries out the reaction (9Z,12Z)-octadecadienoate + O2 = (13S)-hydroperoxy-(9Z,11E)-octadecadienoate. It catalyses the reaction (9Z,12Z,15Z)-octadecatrienoate + O2 = (13S)-hydroperoxy-(9Z,11E,15Z)-octadecatrienoate. It participates in lipid metabolism; oxylipin biosynthesis. Its function is as follows. 13S-lipoxygenase that can use linolenic acid as substrates. Plant lipoxygenases may be involved in a number of diverse aspects of plant physiology including growth and development, pest resistance, and senescence or responses to wounding. Catalyzes the hydroperoxidation of lipids containing a cis,cis-1,4-pentadiene structure. In Arabidopsis thaliana (Mouse-ear cress), this protein is Lipoxygenase 3, chloroplastic (LOX3).